The following is a 607-amino-acid chain: MDDDKGTDTAKEGCSTWCLLEAACSDDSDLDDSLEKLFEENAESDVSDLINDDDNAAQGNSRELLCQQESEECEQQIQYLKRKYNISPEAVQQLSPRLQSLNLSPGHKSKRRLFVEQDSGLELSLNEVEDFTQELEVPASAPGPAAQGGVGLGHIESLLRCKNAKAVLLHKFKEGFGISYNELTRQFKSNKTCCKHWVLAIYGAKEELIDASKQLLQQHCSYIWLQTYTPMSLYLCCFNVAKSRETVVKLLISMLQIHENHILSEPPKNRSVPVALFWYKGSMNPNVYAFGEYPEWIVTQTMIQHQTADSIQFDLSRMIQWAYDNDHLDECSIAYNYAKLADTDSNARAFLAQNSQAKHVRDCAQMVKHYKRGEMREMTISAWVHHCISRIEGDGQWQDIVKFLRYQGLNFIVFLDKFRTFLQNFPKKNCLLIYGPPDTGKSMFTMSLMKALRGQVISFANSKSQFWLQPLADAKIALLDDATEVCWQYIDMFLRNGLDGNVVSLDMKHRAPCQMKFPPLIITSNISLKKEKKFPYLHSRIYEFEFPNRFPFDSDDKPLFKLTDQSWASFFKRLWIQLGLSDQEDEGEDGSTQRTFQCTTRQVNGPV.

The short motif at Lys-81–Lys-83 is the Nuclear localization signal element. 2 positions are modified to phosphoserine; by host: Ser-87 and Ser-95. Residues Leu-94 to Leu-103 carry the Nuclear export signal motif. Residues Gln-147 to Ser-310 form a DNA-binding region region. The SF3 helicase domain maps to Leu-409–Leu-559. Residue Gly-435 to Ser-442 coordinates ATP. Residue Lys-516 forms a Glycyl lysine isopeptide (Lys-Gly) (interchain with G-Cter in SUMO) linkage. The disordered stretch occupies residues Gln-583 to Val-607. A compositionally biased stretch (polar residues) spans Gly-590–Val-607.

Belongs to the papillomaviridae E1 protein family. Can form hexamers. Interacts with E2 protein; this interaction increases E1 DNA binding specificity. Interacts with host DNA polymerase subunit POLA2. Interacts with host single stranded DNA-binding protein RPA1. Interacts with host TOP1; this interaction stimulates the enzymatic activity of TOP1. Phosphorylated. In terms of processing, sumoylated.

It localises to the host nucleus. It catalyses the reaction Couples ATP hydrolysis with the unwinding of duplex DNA by translocating in the 3'-5' direction.. The enzyme catalyses ATP + H2O = ADP + phosphate + H(+). Its function is as follows. ATP-dependent DNA 3'-5' helicase required for initiation of viral DNA replication. It forms a complex with the viral E2 protein. The E1-E2 complex binds to the replication origin which contains binding sites for both proteins. During the initial step, a dimer of E1 interacts with a dimer of protein E2 leading to a complex that binds the viral origin of replication with high specificity. Then, a second dimer of E1 displaces the E2 dimer in an ATP-dependent manner to form the E1 tetramer. Following this, two E1 monomers are added to each half of the site, which results in the formation of two E1 trimers on the viral ori. Subsequently, two hexamers will be created. The double hexamer acts as a bi-directional helicase machinery and unwinds the viral DNA and then recruits the host DNA polymerase to start replication. The sequence is that of Replication protein E1 from Human papillomavirus 23.